Consider the following 352-residue polypeptide: Iron-sulfur cluster carrier protein (352 aa).

Residue 114–121 (GKGGVGKS) participates in ATP binding.

The protein belongs to the Mrp/NBP35 ATP-binding proteins family. Homodimer. Interacts with BrxC.

Its function is as follows. Binds and transfers iron-sulfur (Fe-S) clusters to target apoproteins. Can hydrolyze ATP. Functionally, negatively regulates the expression of hpr/scoC. The effect on hpr/scoC may be indirect. This chain is Iron-sulfur cluster carrier protein (salA), found in Bacillus subtilis (strain 168).